A 428-amino-acid chain; its full sequence is Kynureninase (428 aa).

Residues Thr-104, Thr-105, 132-135 (FPSD), Asp-213, His-216, and Tyr-238 contribute to the pyridoxal 5'-phosphate site. The residue at position 239 (Lys-239) is an N6-(pyridoxal phosphate)lysine. The pyridoxal 5'-phosphate site is built by Trp-267 and Thr-295.

It belongs to the kynureninase family. As to quaternary structure, homodimer. Pyridoxal 5'-phosphate serves as cofactor.

It carries out the reaction L-kynurenine + H2O = anthranilate + L-alanine + H(+). It catalyses the reaction 3-hydroxy-L-kynurenine + H2O = 3-hydroxyanthranilate + L-alanine + H(+). It participates in amino-acid degradation; L-kynurenine degradation; L-alanine and anthranilate from L-kynurenine: step 1/1. It functions in the pathway cofactor biosynthesis; NAD(+) biosynthesis; quinolinate from L-kynurenine: step 2/3. Catalyzes the cleavage of L-kynurenine (L-Kyn) and L-3-hydroxykynurenine (L-3OHKyn) into anthranilic acid (AA) and 3-hydroxyanthranilic acid (3-OHAA), respectively. The chain is Kynureninase from Bacillus thuringiensis subsp. konkukian (strain 97-27).